We begin with the raw amino-acid sequence, 108 residues long: Replication restart protein PriB (108 aa).

Residues 11–108 (INRNQVIISG…VLHVRDTRII (98 aa)) form the SSB domain.

The protein belongs to the PriB family. Homodimer. Interacts with PriA and DnaT. Component of the replication restart primosome. Primosome assembly occurs via a 'hand-off' mechanism. PriA binds to replication forks, subsequently PriB then DnaT bind; DnaT then displaces ssDNA to generate the helicase loading substrate.

Its function is as follows. Involved in the restart of stalled replication forks, which reloads the replicative helicase on sites other than the origin of replication; the PriA-PriB pathway is the major replication restart pathway. During primosome assembly it facilitates complex formation between PriA and DnaT on DNA; stabilizes PriA on DNA. Stimulates the DNA unwinding activity of PriA helicase. In Nitrosomonas europaea (strain ATCC 19718 / CIP 103999 / KCTC 2705 / NBRC 14298), this protein is Replication restart protein PriB.